The following is a 429-amino-acid chain: Protein ABERRANT PANICLE ORGANIZATION 1 (429 aa).

The span at 1-11 (MMNPRRLPPLP) shows a compositional bias: pro residues. Residues 1–21 (MMNPRRLPPLPSSTSSASAAD) are disordered. The F-box domain maps to 25–71 (PRVWRRLPQPLVDRVLACLPTPSFLRLRAACRRFYHLLFSSPFLHSH). 2 helical membrane passes run 72–92 (LLLS…GHLL) and 112–132 (VAGG…LAFL). Kelch repeat units follow at residues 229–277 (MAFA…ELGG), 284–339 (RVAL…AEGG), and 350–397 (YVVL…GAAG).

As to quaternary structure, part of a putative SCF (ASK/Cullin/F-box) ubiquitin ligase complex. Interacts with FL/APO2. In terms of tissue distribution, expressed in seedlings, roots, leaves, shoot apical meristem (SAM), developing panicles, and, at lower levels, in developing seeds.

The protein resides in the membrane. Its pathway is protein modification; protein ubiquitination. In terms of biological role, component of SCF(ASK-cullin-F-box) E3 ubiquitin ligase complexes, which may mediate the ubiquitination and subsequent proteasomal degradation of target proteins. Together with FL/APO2, involved in the temporal regulation of meristem identity during both vegetative and reproductive developments in an APO2-dependent manner. Promotes spikelet formation by suppressing the precocious conversion of inflorescence meristems to spikelet meristems, probably via a positive regulation of class-C floral homeotic genes, but not of class-B genes, and through the control of cell proliferation in meristems. Mediates culm development and strength/diameter enhancement at internodes. Required for the regulation of the plastochron, floral organ identity, and floral determinacy. Controls the number of primary rachis branches (PRBs). May trigger the formation of vascular bundle systems which, consequently, promote carbohydrate translocation to panicles. Involved in ozone-induced grain yield regulation. This is Protein ABERRANT PANICLE ORGANIZATION 1 from Oryza sativa subsp. indica (Rice).